The chain runs to 838 residues: DNA gyrase subunit A (838 aa).

Residues 41-510 (LPEVRDGLKP…ADGDVSDEDL (470 aa)) enclose the Topo IIA-type catalytic domain. The active-site O-(5'-phospho-DNA)-tyrosine intermediate is the Tyr-129. A GyrA-box motif is present at residues 537–543 (QKRGGKG).

It belongs to the type II topoisomerase GyrA/ParC subunit family. In terms of assembly, heterotetramer, composed of two GyrA and two GyrB chains. In the heterotetramer, GyrA contains the active site tyrosine that forms a transient covalent intermediate with DNA, while GyrB binds cofactors and catalyzes ATP hydrolysis.

It is found in the cytoplasm. The enzyme catalyses ATP-dependent breakage, passage and rejoining of double-stranded DNA.. In terms of biological role, a type II topoisomerase that negatively supercoils closed circular double-stranded (ds) DNA in an ATP-dependent manner to modulate DNA topology and maintain chromosomes in an underwound state. Negative supercoiling favors strand separation, and DNA replication, transcription, recombination and repair, all of which involve strand separation. Also able to catalyze the interconversion of other topological isomers of dsDNA rings, including catenanes and knotted rings. Type II topoisomerases break and join 2 DNA strands simultaneously in an ATP-dependent manner. This chain is DNA gyrase subunit A, found in Mycobacterium tuberculosis (strain CDC 1551 / Oshkosh).